Consider the following 37-residue polypeptide: Large ribosomal subunit protein bL36 (37 aa).

It belongs to the bacterial ribosomal protein bL36 family.

The chain is Large ribosomal subunit protein bL36 from Solidesulfovibrio magneticus (strain ATCC 700980 / DSM 13731 / RS-1) (Desulfovibrio magneticus).